We begin with the raw amino-acid sequence, 190 residues long: UPF0340 protein BT9727_4999 (190 aa).

Belongs to the UPF0340 family.

In Bacillus thuringiensis subsp. konkukian (strain 97-27), this protein is UPF0340 protein BT9727_4999.